Reading from the N-terminus, the 321-residue chain is Lipoyl synthase (321 aa).

Positions 68, 73, 79, 94, 98, 101, and 308 each coordinate [4Fe-4S] cluster. In terms of domain architecture, Radical SAM core spans 80–297 (FNHGTATFMI…KALADELGFT (218 aa)).

It belongs to the radical SAM superfamily. Lipoyl synthase family. [4Fe-4S] cluster serves as cofactor.

It is found in the cytoplasm. The enzyme catalyses [[Fe-S] cluster scaffold protein carrying a second [4Fe-4S](2+) cluster] + N(6)-octanoyl-L-lysyl-[protein] + 2 oxidized [2Fe-2S]-[ferredoxin] + 2 S-adenosyl-L-methionine + 4 H(+) = [[Fe-S] cluster scaffold protein] + N(6)-[(R)-dihydrolipoyl]-L-lysyl-[protein] + 4 Fe(3+) + 2 hydrogen sulfide + 2 5'-deoxyadenosine + 2 L-methionine + 2 reduced [2Fe-2S]-[ferredoxin]. The protein operates within protein modification; protein lipoylation via endogenous pathway; protein N(6)-(lipoyl)lysine from octanoyl-[acyl-carrier-protein]: step 2/2. Functionally, catalyzes the radical-mediated insertion of two sulfur atoms into the C-6 and C-8 positions of the octanoyl moiety bound to the lipoyl domains of lipoate-dependent enzymes, thereby converting the octanoylated domains into lipoylated derivatives. This Shewanella baltica (strain OS185) protein is Lipoyl synthase.